Consider the following 321-residue polypeptide: Nitrilase blr3397 (321 aa).

A CN hydrolase domain is found at 10-277 (YKAAVVQAAS…ETILYADIAL (268 aa)). Residue E50 is the Proton acceptor of the active site. The Proton donor role is filled by K137. C171 serves as the catalytic Nucleophile.

It belongs to the carbon-nitrogen hydrolase superfamily. Nitrilase family. Homodecamer.

It catalyses the reaction an aliphatic nitrile + 2 H2O = a carboxylate + NH4(+). Its function is as follows. Nitrilase that acts on various kinds of nitrile compounds such as aliphatic and aromatic nitriles. Has higher activity toward aliphatic nitriles compared to aromatic nitriles. Among the different substrates tested, has the highest activity toward hydrocinnamonitrile. This chain is Nitrilase blr3397, found in Bradyrhizobium diazoefficiens (strain JCM 10833 / BCRC 13528 / IAM 13628 / NBRC 14792 / USDA 110).